Reading from the N-terminus, the 297-residue chain is Methionyl-tRNA formyltransferase (297 aa).

The segment at 31–52 (QPPRAAGRGQKPRPSPVHRAAE) is disordered. 108–111 (SLLP) is a (6S)-5,6,7,8-tetrahydrofolate binding site.

Belongs to the Fmt family.

It catalyses the reaction L-methionyl-tRNA(fMet) + (6R)-10-formyltetrahydrofolate = N-formyl-L-methionyl-tRNA(fMet) + (6S)-5,6,7,8-tetrahydrofolate + H(+). In terms of biological role, attaches a formyl group to the free amino group of methionyl-tRNA(fMet). The formyl group appears to play a dual role in the initiator identity of N-formylmethionyl-tRNA by promoting its recognition by IF2 and preventing the misappropriation of this tRNA by the elongation apparatus. The polypeptide is Methionyl-tRNA formyltransferase (Paracoccus denitrificans (strain Pd 1222)).